Here is a 168-residue protein sequence, read N- to C-terminus: Phosphopantetheine adenylyltransferase (168 aa).

Residue Thr-9 participates in substrate binding. ATP is bound by residues 9-10 (TF) and His-17. Substrate-binding residues include Lys-41, Leu-73, and Arg-87. ATP contacts are provided by residues 88–90 (GLR), Glu-98, and 123–129 (YQFISGT).

Belongs to the bacterial CoaD family. In terms of assembly, homohexamer. Mg(2+) is required as a cofactor.

The protein resides in the cytoplasm. It catalyses the reaction (R)-4'-phosphopantetheine + ATP + H(+) = 3'-dephospho-CoA + diphosphate. Its pathway is cofactor biosynthesis; coenzyme A biosynthesis; CoA from (R)-pantothenate: step 4/5. In terms of biological role, reversibly transfers an adenylyl group from ATP to 4'-phosphopantetheine, yielding dephospho-CoA (dPCoA) and pyrophosphate. The protein is Phosphopantetheine adenylyltransferase of Paraburkholderia phymatum (strain DSM 17167 / CIP 108236 / LMG 21445 / STM815) (Burkholderia phymatum).